The following is a 281-amino-acid chain: NADPH-dependent 7-cyano-7-deazaguanine reductase (281 aa).

Residue 87–89 (IES) participates in substrate binding. Residue 89-90 (SK) participates in NADPH binding. The Thioimide intermediate role is filled by Cys188. Asp195 acts as the Proton donor in catalysis. 227–228 (HE) provides a ligand contact to substrate. 256–257 (RG) provides a ligand contact to NADPH. Residues 261–281 (INPYRSTEQDKPAHNHRMARQ) are disordered.

It belongs to the GTP cyclohydrolase I family. QueF type 2 subfamily. Homodimer.

The protein resides in the cytoplasm. The catalysed reaction is 7-aminomethyl-7-carbaguanine + 2 NADP(+) = 7-cyano-7-deazaguanine + 2 NADPH + 3 H(+). It participates in tRNA modification; tRNA-queuosine biosynthesis. Functionally, catalyzes the NADPH-dependent reduction of 7-cyano-7-deazaguanine (preQ0) to 7-aminomethyl-7-deazaguanine (preQ1). The polypeptide is NADPH-dependent 7-cyano-7-deazaguanine reductase (Vibrio parahaemolyticus serotype O3:K6 (strain RIMD 2210633)).